The following is a 122-amino-acid chain: Phospholipase A2 crotoxin basic subunit CBb (122 aa).

Intrachain disulfides connect Cys-26–Cys-115, Cys-28–Cys-44, Cys-43–Cys-95, Cys-49–Cys-122, Cys-50–Cys-88, Cys-57–Cys-81, and Cys-75–Cys-86. Residues Tyr-27, Gly-29, and Gly-31 each contribute to the Ca(2+) site. Residue His-47 is part of the active site. Residue Asp-48 participates in Ca(2+) binding. Asp-89 is an active-site residue.

The protein belongs to the phospholipase A2 family. Group II subfamily. D49 sub-subfamily. As to quaternary structure, heterodimer of one of the acidic (CA1, CA2, CA3 or CA4) and one of the basic (CBa1, CBa2, CBb, CBc or CBd) subunits; non-covalently linked. The acidic subunit is non-toxic, without enzymatic activity and comprises 3 peptides that are cross-linked by 5 disulfide bridges. The basic subunit is toxic, has phospholipase A2 activity and is composed of a single chain. Multiple variants of each subunit give different crotoxin complexes that can be subdivided into 2 classes: (1) those of high toxicity, low PLA2 activity (CBb, CBc and CBd linked with high affinity to any CA) and high stability (K(d)=4.5 nM) and (2) those of moderate toxicity, high PLA2 activity (CBa2 linked with low affinity to any CA) and low stability (K(d)=25 nM). The cofactor is Ca(2+). Expressed by the venom gland.

It is found in the secreted. It carries out the reaction a 1,2-diacyl-sn-glycero-3-phosphocholine + H2O = a 1-acyl-sn-glycero-3-phosphocholine + a fatty acid + H(+). In terms of biological role, heterodimer CA-CB: Crotoxin is a potent presynaptic neurotoxin that possesses phospholipase A2 (PLA2) activity and exerts a lethal action by blocking neuromuscular transmission. It consists of a non-covalent association of a basic and weakly toxic PLA2 subunit (CBa2, CBb, CBc, or CBd), with a small acidic, non-enzymatic and non-toxic subunit (CA1, CA2, CA3 or CA4). The complex acts by binding to a specific 48-kDa protein (R48) receptor located on presynaptic membranes, forming a transient ternary complex CA-CB-R48, followed by dissociation of the CA-CB complex and release of the CA subunit. At equilibrium, only the CB subunits remain associated with the specific crotoxin receptor. In addition to neurotoxicity, crotoxin has been found to exert myotoxicity, nephrotoxicity, and cardiovascular toxicity. Moreover, anti-inflammatory, immunomodulatory, anti-tumor and analgesic effects of crotoxin have also been reported. Monomer CBb: The basic subunit of crotoxin is a snake venom phospholipase A2 (PLA2) that exhibits weak neurotoxicity (10-fold less than the heterodimer) and strong anticoagulant effects by binding to factor Xa (F10) and inhibiting the prothrombinase activity. In addition, it shows the same effects described for the heterodimer and binds the nucleotide-binding domain (NBD1) of CFTR chloride channels and increases the channel current. PLA2 catalyzes the calcium-dependent hydrolysis of the 2-acyl groups in 3-sn-phosphoglycerides. This is Phospholipase A2 crotoxin basic subunit CBb from Crotalus durissus terrificus (South American rattlesnake).